Reading from the N-terminus, the 200-residue chain is GTP cyclohydrolase-2 (200 aa).

Position 49-53 (arginine 49–glutamate 53) interacts with GTP. Positions 54, 65, and 67 each coordinate Zn(2+). Residues glutamine 70, glutamate 92–arginine 94, and threonine 114 contribute to the GTP site. Residue aspartate 126 is the Proton acceptor of the active site. The active-site Nucleophile is arginine 128. Residues threonine 149 and lysine 154 each contribute to the GTP site.

This sequence belongs to the GTP cyclohydrolase II family. Zn(2+) serves as cofactor.

It carries out the reaction GTP + 4 H2O = 2,5-diamino-6-hydroxy-4-(5-phosphoribosylamino)-pyrimidine + formate + 2 phosphate + 3 H(+). The protein operates within cofactor biosynthesis; riboflavin biosynthesis; 5-amino-6-(D-ribitylamino)uracil from GTP: step 1/4. Its function is as follows. Catalyzes the conversion of GTP to 2,5-diamino-6-ribosylamino-4(3H)-pyrimidinone 5'-phosphate (DARP), formate and pyrophosphate. This Saccharophagus degradans (strain 2-40 / ATCC 43961 / DSM 17024) protein is GTP cyclohydrolase-2.